Consider the following 200-residue polypeptide: Peptidyl-tRNA hydrolase (200 aa).

Phenylalanine 16 is a binding site for tRNA. Catalysis depends on histidine 21, which acts as the Proton acceptor. Residues phenylalanine 67, asparagine 69, and asparagine 115 each coordinate tRNA.

The protein belongs to the PTH family. As to quaternary structure, monomer.

It localises to the cytoplasm. It catalyses the reaction an N-acyl-L-alpha-aminoacyl-tRNA + H2O = an N-acyl-L-amino acid + a tRNA + H(+). Functionally, hydrolyzes ribosome-free peptidyl-tRNAs (with 1 or more amino acids incorporated), which drop off the ribosome during protein synthesis, or as a result of ribosome stalling. Its function is as follows. Catalyzes the release of premature peptidyl moieties from peptidyl-tRNA molecules trapped in stalled 50S ribosomal subunits, and thus maintains levels of free tRNAs and 50S ribosomes. In Prochlorococcus marinus (strain MIT 9215), this protein is Peptidyl-tRNA hydrolase.